The chain runs to 269 residues: Spermatogenesis-associated serine-rich protein 1 (269 aa).

The segment covering 1–14 (MESSKDTQHGDALE) has biased composition (basic and acidic residues). Residues 1-92 (MESSKDTQHG…SKVSLPEIPK (92 aa)) are disordered. Residues 18–38 (CLANRTSSRQNKRTSLSSSDG) show a composition bias toward polar residues. T54 is subject to Phosphothreonine. Over residues 67–86 (SSSSSSSSSSAQSNRSSKVS) the composition is skewed to low complexity. S72, S75, and S82 each carry phosphoserine.

This chain is Spermatogenesis-associated serine-rich protein 1 (Spats1), found in Mus musculus (Mouse).